Here is a 223-residue protein sequence, read N- to C-terminus: Cell division protein SepF (223 aa).

The disordered stretch occupies residues 19 to 81 (YDDEYYDDRG…YPPPGGYRGG (63 aa)). Over residues 36 to 69 (PRFEDDYGRYEGRDFEDPRRDPRAGMRADLRGEP) the composition is skewed to basic and acidic residues.

This sequence belongs to the SepF family. As to quaternary structure, homodimer. Interacts with FtsZ.

It localises to the cytoplasm. In terms of biological role, cell division protein that is part of the divisome complex and is recruited early to the Z-ring. Probably stimulates Z-ring formation, perhaps through the cross-linking of FtsZ protofilaments. Its function overlaps with FtsA. The polypeptide is Cell division protein SepF (Mycobacterium ulcerans (strain Agy99)).